A 76-amino-acid chain; its full sequence is Pigment-dispersing hormone A peptides (76 aa).

The signal sequence occupies residues 1–20; it reads MRSAMVVLVLVAMVAVFTRA. Ala-73 is subject to Alanine amide.

It belongs to the arthropod PDH family. Optical ganglia of the eyestalk.

It is found in the secreted. The pigment-dispersing hormone causes the migration of the distal retinal pigment into the proximal end of the pigment chromatophore cells and thus decreases the amount of light entering the retinulas. May also function as a neurotransmitter and/or neuromodulator. This chain is Pigment-dispersing hormone A peptides, found in Faxonius limosus (Spinycheek crayfish).